The primary structure comprises 344 residues: Sensor histidine kinase GraS (344 aa).

A run of 2 helical transmembrane segments spans residues 18-38 (IFWI…DYDI) and 43-63 (IGFI…FTFL). A Histidine kinase domain is found at 126-332 (EFVHDIKTPV…TFVLTFPKQN (207 aa)). Position 129 is a phosphohistidine; by autocatalysis (H129).

Post-translationally, autophosphorylated.

The protein resides in the cell membrane. It carries out the reaction ATP + protein L-histidine = ADP + protein N-phospho-L-histidine.. Functionally, member of the two-component regulatory system GraR/GraS involved in resistance against cationic antimicrobial peptides (CAMPs). GraS probably functions as a sensor protein kinase which is autophosphorylated at a histidine residue and transfers its phosphate group to GraR. The polypeptide is Sensor histidine kinase GraS (graS) (Staphylococcus haemolyticus (strain JCSC1435)).